Reading from the N-terminus, the 103-residue chain is Small ribosomal subunit protein uS10 (103 aa).

The protein belongs to the universal ribosomal protein uS10 family. As to quaternary structure, part of the 30S ribosomal subunit.

In terms of biological role, involved in the binding of tRNA to the ribosomes. This Xylella fastidiosa (strain 9a5c) protein is Small ribosomal subunit protein uS10.